Reading from the N-terminus, the 642-residue chain is Arginine--tRNA ligase (642 aa).

A 'HIGH' region motif is present at residues 133-143 (VNPTKPLHMGH).

It belongs to the class-I aminoacyl-tRNA synthetase family.

Its subcellular location is the cytoplasm. The catalysed reaction is tRNA(Arg) + L-arginine + ATP = L-arginyl-tRNA(Arg) + AMP + diphosphate. This chain is Arginine--tRNA ligase, found in Thermococcus kodakarensis (strain ATCC BAA-918 / JCM 12380 / KOD1) (Pyrococcus kodakaraensis (strain KOD1)).